Consider the following 517-residue polypeptide: Putative ribose/galactose/methyl galactoside import ATP-binding protein 1 (517 aa).

ABC transporter domains are found at residues 23 to 258 (LQLQ…VGRP) and 269 to 515 (TPTD…SGRS). 55–62 (GENGAGKS) is a binding site for ATP.

This sequence belongs to the ABC transporter superfamily. Carbohydrate importer 2 (CUT2) (TC 3.A.1.2) family.

The protein localises to the cell inner membrane. The enzyme catalyses D-ribose(out) + ATP + H2O = D-ribose(in) + ADP + phosphate + H(+). The catalysed reaction is D-galactose(out) + ATP + H2O = D-galactose(in) + ADP + phosphate + H(+). Part of an ABC transporter complex involved in carbohydrate import. Could be involved in ribose, galactose and/or methyl galactoside import. Responsible for energy coupling to the transport system. The polypeptide is Putative ribose/galactose/methyl galactoside import ATP-binding protein 1 (Burkholderia ambifaria (strain ATCC BAA-244 / DSM 16087 / CCUG 44356 / LMG 19182 / AMMD) (Burkholderia cepacia (strain AMMD))).